Here is a 365-residue protein sequence, read N- to C-terminus: UPF0718 protein MJ0584 (365 aa).

11 consecutive transmembrane segments (helical) span residues 6–26 (MSFI…YLNV), 32–52 (LLMA…NFII), 67–87 (VAAV…PLFA), 108–128 (AINV…IGFL), 130–150 (AVFA…IFKS), 174–194 (ITFF…PKLF), 201–221 (LYDG…ILAV), 245–265 (IVFP…AIIP), 282–302 (FIAS…VPII), 308–328 (LGMG…LSIP), and 344–364 (TYLG…GIIL).

It belongs to the UPF0718 family.

The protein localises to the cell membrane. The sequence is that of UPF0718 protein MJ0584 from Methanocaldococcus jannaschii (strain ATCC 43067 / DSM 2661 / JAL-1 / JCM 10045 / NBRC 100440) (Methanococcus jannaschii).